The sequence spans 1346 residues: Adhesion G protein-coupled receptor F5 (1346 aa).

An N-terminal signal peptide occupies residues 1–21 (MKSPRRTTLCLMFIVIYSSKA). Topologically, residues 22-1006 (ALNWNYESTI…MSPDSPDPSS (985 aa)) are extracellular. Asn-73, Asn-94, Asn-106, Asn-188, Asn-256, Asn-272, Asn-301, Asn-315, Asn-328, Asn-398, Asn-472, Asn-487, Asn-505, Asn-540, Asn-627, Asn-649, Asn-666, Asn-820, Asn-931, Asn-963, and Asn-982 each carry an N-linked (GlcNAc...) asparagine glycan. Positions 166 to 273 (LQEDVTLNMR…NSFQAVTINE (108 aa)) constitute an SEA domain. Ig-like domains are found at residues 267–368 (QAVT…IDVM), 369–466 (PIQI…IKVT), and 471–561 (ANLT…KDVI). Disulfide bonds link Cys-293–Cys-350 and Cys-391–Cys-449. Cys-492 and Cys-545 are oxidised to a cystine. Positions 842 to 1003 (PPLSFSQTNV…SILMSPDSPD (162 aa)) constitute a GAIN-B domain. Cystine bridges form between Cys-954/Cys-985 and Cys-973/Cys-987. Positions 954-1003 (CVFWNFRLANNTGGWDSSGCYVEEGDGDNVTCICDHLTSFSILMSPDSPD) are GPS. The tethered agonist stretch occupies residues 991–1006 (TSFSILMSPDSPDPSS). Residues 1007 to 1027 (LLGILLDIISYVGVGFSILSL) traverse the membrane as a helical segment. The Cytoplasmic portion of the chain corresponds to 1028 to 1053 (AACLVVEAVVWKSVTKNRTSYMRHTC). Residues 1054 to 1074 (IVNIAASLLVANTWFIVVAAI) form a helical membrane-spanning segment. Over 1075–1090 (QDNRYILCKTACVAAT) the chain is Extracellular. A helical membrane pass occupies residues 1091–1111 (FFIHFFYLSVFFWMLTLGLML). The Cytoplasmic segment spans residues 1112-1128 (FYRLVFILHETSRSTQK). A helical transmembrane segment spans residues 1129-1149 (AIAFCLGYGCPLAISVITLGA). Residues 1150–1173 (TQPREVYTRKNVCWLNWEDTKALL) are Extracellular-facing. The chain crosses the membrane as a helical span at residues 1174–1194 (AFAIPALIIVVVNITITIVVI). The Cytoplasmic portion of the chain corresponds to 1195 to 1220 (TKILRPSIGDKPCKQEKSSLFQISKS). The helical transmembrane segment at 1221–1241 (IGVLTPLLGLTWGFGLTTVFP) threads the bilayer. Over 1242 to 1244 (GTN) the chain is Extracellular. A helical transmembrane segment spans residues 1245-1265 (LVFHIIFAILNVFQGLFILLF). At 1266–1346 (GCLWDLKVQE…NSSSASSLLN (81 aa)) the chain is on the cytoplasmic side. A Phosphothreonine modification is found at Thr-1300. Ser-1307 carries the post-translational modification Phosphoserine. The segment at 1327-1346 (TPEATSSSLENSSSASSLLN) is disordered. Low complexity predominate over residues 1329-1346 (EATSSSLENSSSASSLLN).

The protein belongs to the G-protein coupled receptor 2 family. Adhesion G-protein coupled receptor (ADGR) subfamily. In terms of assembly, homodimer; disulfide-linked. Heterodimer of 2 chains generated by proteolytic processing; the large extracellular N-terminal fragment and the membrane-bound C-terminal fragment predominantly remain associated and non-covalently linked. Fragment generates by the processing enzyme furin remains attached to the extracellular N-terminal fragment. Interacts (via N-terminal extracellular domain) with SFTPD. In terms of processing, highly glycosylated. Proteolytically cleaved at multiple sites: one in the GPS region of the GAIN-B domain (S1 site) and the other in the SEA domain (S2 site). The proteolytic cleavage at S1 site generates an extracellular subunit and a seven-transmembrane subunit. The proteolytic cleavage at S2 site generates a fragment that undergoes proteolytic cleavage by the processing enzyme furin. Expressed in lung endothelial cells and in alveolar type II (ATII) cells (at protein level). Expressed high levels in subcutaneous adipose tissue in lean individuals and at lower levels in visceral fat. Expression levels in subcutaneous adipose tissue drastically drop in obese individuals.

Its subcellular location is the cell membrane. With respect to regulation, as an adhesion G protein-coupled receptor (aGPCR) exhibits a large N-terminal extracellular domain containing highly conserved GPCR autoproteolysis-inducing (GAIN) domain. During synthesis, intracellular autoproteolytic processing of nascent chain within the GAIN domain generates a mature protein, consisting of an N-terminal fragment that is non-covalently linked to the C-terminal fragment. The mature protein is routed to the plasma membrane where the N- and C-terminal fragments remain associated, forming the holoreceptor. Dissociation of the aGPCR fragments stimulates G protein signaling through the action of the tethered-peptide agonist stalk that is occluded within the GAIN domain in the holoreceptor form. This dissociation might be induced by ligand binding, such as that of sFNDC4. Functionally, adhesion G protein-coupled receptor. In alveolar type II (ATII or AT2) cells, required for normal lung surfactant homeostasis. Modulation of both surfactant secretion and uptake by ATII cells is mediated by the downstream activation of GNAQ/GNA11 proteins and may be a consequence of increased cortical F-actin assembly induced by ADGRF5 activation. In the kidney, may play a role in the regulation of acid excretion into the primary urine, possibly by regulating the surface expression of V-ATPase proton pump. As a receptor for soluble FNDC4 (sFNDC4), required for proper systemic glucose tolerance, specifically sensitizing white adipose tissue to insulin. Also plays a role in sFNDC4-induced decrease of local inflammation in white adipose tissue. This chain is Adhesion G protein-coupled receptor F5, found in Homo sapiens (Human).